We begin with the raw amino-acid sequence, 309 residues long: MVKIYAPASIGNVSVGFDVLGAAVSPVDGTLLGDCVSVTASDSFSLRNEGRFVSKLPDDPKENIVYQCWERFCQEMGKEIPVALVLEKNMPIGSGLGSSACSVVAGLMAMNEFCGKPLDKVTLLGMMGELEGRVSGSVHFDNVAPCYLGGMQLILEQPGYISQDVPGFDDWLWVMAYPGIKVSTAEARAILPAQYRRQDCIAHGRNLAGFIHACHTQQPSLAAKMMKDVIAEPYRTQLLPGFAAARQAAQDIGALACGISGSGPTLFAVCNDSETAQRMASWLQNHYLQNDEGFVHICRLDTAGARLLG.

91-101 (PIGSGLGSSAC) contributes to the ATP binding site.

This sequence belongs to the GHMP kinase family. Homoserine kinase subfamily.

It localises to the cytoplasm. It catalyses the reaction L-homoserine + ATP = O-phospho-L-homoserine + ADP + H(+). Its pathway is amino-acid biosynthesis; L-threonine biosynthesis; L-threonine from L-aspartate: step 4/5. Its function is as follows. Catalyzes the ATP-dependent phosphorylation of L-homoserine to L-homoserine phosphate. This chain is Homoserine kinase, found in Yersinia enterocolitica serotype O:8 / biotype 1B (strain NCTC 13174 / 8081).